Here is a 210-residue protein sequence, read N- to C-terminus: Chaperone protein TorD (210 aa).

The protein belongs to the TorD/DmsD family. TorD subfamily.

The protein localises to the cytoplasm. Functionally, involved in the biogenesis of TorA. Acts on TorA before the insertion of the molybdenum cofactor and, as a result, probably favors a conformation of the apoenzyme that is competent for acquiring the cofactor. The protein is Chaperone protein TorD of Salmonella agona (strain SL483).